The sequence spans 390 residues: GTPase Obg (390 aa).

Positions 1-159 (MKFVDEATIL…RELTLELLLL (159 aa)) constitute an Obg domain. The tract at residues 128 to 147 (SRFKSSVNRAPRQKTNGTKG) is disordered. The segment covering 129–145 (RFKSSVNRAPRQKTNGT) has biased composition (polar residues). One can recognise an OBG-type G domain in the interval 160-333 (ADVGMLGLPN…LCWDVMNFLK (174 aa)). Residues 166 to 173 (GLPNAGKS), 191 to 195 (FTTLV), 213 to 216 (DIPG), 283 to 286 (NKVD), and 314 to 316 (SAA) each bind GTP. The Mg(2+) site is built by serine 173 and threonine 193.

It belongs to the TRAFAC class OBG-HflX-like GTPase superfamily. OBG GTPase family. Monomer. Mg(2+) serves as cofactor.

It localises to the cytoplasm. In terms of biological role, an essential GTPase which binds GTP, GDP and possibly (p)ppGpp with moderate affinity, with high nucleotide exchange rates and a fairly low GTP hydrolysis rate. Plays a role in control of the cell cycle, stress response, ribosome biogenesis and in those bacteria that undergo differentiation, in morphogenesis control. The chain is GTPase Obg from Pectobacterium atrosepticum (strain SCRI 1043 / ATCC BAA-672) (Erwinia carotovora subsp. atroseptica).